The chain runs to 1678 residues: Clathrin heavy chain (1678 aa).

7 WD40-like repeat regions span residues 24-67 (SFSF…RPIS), 68-107 (ADSA…MNED), 108-149 (VVFW…SSLN), 150-195 (GCQI…QAIE), 196-257 (GHAA…PEAQ), 258-301 (NDFP…ISAD), and 302-330 (TIFV…VTVD). 7 CHCR repeats span residues 538–684 (VAEE…QICV), 687–829 (ATKY…SEDI), 834–973 (ILVV…QLID), 980–1125 (LSET…VKEA), 1129–1270 (YIKA…FRLA), 1275–1421 (LHIV…LLLN), and 1424–1567 (LLVL…YDCF). Residues 1334-1643 (REHLELFWSR…IQMEPQLMIT (310 aa)) are involved in binding clathrin light chain. Residues 1552–1677 (EELLGWFLER…AGGRNMGYPY (126 aa)) are trimerization.

This sequence belongs to the clathrin heavy chain family. In terms of assembly, clathrin triskelions, composed of 3 heavy chains and 3 light chains, are the basic subunits of the clathrin coat. Interacts with sau.

The protein localises to the cytoplasmic vesicle membrane. It localises to the membrane. The protein resides in the coated pit. In terms of biological role, clathrin is the major protein of the polyhedral coat of coated pits and vesicles. The chain is Clathrin heavy chain (Chc) from Drosophila melanogaster (Fruit fly).